Consider the following 428-residue polypeptide: Adenylosuccinate synthetase (428 aa).

Residues 12–18 (GDEGKGK) and 40–42 (GHT) each bind GTP. Asp-13 serves as the catalytic Proton acceptor. Asp-13 and Gly-40 together coordinate Mg(2+). Residues 13-16 (DEGK), 38-41 (NAGH), Thr-130, Arg-144, Gln-225, Thr-240, and Arg-304 contribute to the IMP site. His-41 acts as the Proton donor in catalysis. 300–306 (VTTGRSR) lines the substrate pocket. GTP-binding positions include Arg-306, 332–334 (KID), and 414–416 (GVG).

Belongs to the adenylosuccinate synthetase family. As to quaternary structure, homodimer. The cofactor is Mg(2+).

It is found in the cytoplasm. The catalysed reaction is IMP + L-aspartate + GTP = N(6)-(1,2-dicarboxyethyl)-AMP + GDP + phosphate + 2 H(+). The protein operates within purine metabolism; AMP biosynthesis via de novo pathway; AMP from IMP: step 1/2. Plays an important role in the de novo pathway of purine nucleotide biosynthesis. Catalyzes the first committed step in the biosynthesis of AMP from IMP. The polypeptide is Adenylosuccinate synthetase (Clostridium botulinum (strain Alaska E43 / Type E3)).